The sequence spans 141 residues: Arsenate reductase (141 aa).

The Nucleophile; cysteine thioarsenate intermediate role is filled by C12.

It belongs to the ArsC family.

The catalysed reaction is [glutaredoxin]-dithiol + arsenate + glutathione + H(+) = glutathionyl-S-S-[glutaredoxin] + arsenite + H2O. Functionally, involved in resistance to arsenate. Catalyzes the reduction of arsenate [As(V)] to arsenite [As(III)]. The protein is Arsenate reductase of Escherichia coli.